The following is a 1403-amino-acid chain: DNA-directed RNA polymerase subunit beta' (1403 aa).

Positions 70, 72, 85, and 88 each coordinate Zn(2+). 3 residues coordinate Mg(2+): D460, D462, and D464. Residues C814, C888, C895, and C898 each contribute to the Zn(2+) site. The disordered stretch occupies residues 1369–1403 (RRKRRMLEQPESLTADTGTSHYGEDEISESGAATA). A compositionally biased stretch (polar residues) spans 1379 to 1388 (ESLTADTGTS).

Belongs to the RNA polymerase beta' chain family. The RNAP catalytic core consists of 2 alpha, 1 beta, 1 beta' and 1 omega subunit. When a sigma factor is associated with the core the holoenzyme is formed, which can initiate transcription. Requires Mg(2+) as cofactor. The cofactor is Zn(2+).

It carries out the reaction RNA(n) + a ribonucleoside 5'-triphosphate = RNA(n+1) + diphosphate. DNA-dependent RNA polymerase catalyzes the transcription of DNA into RNA using the four ribonucleoside triphosphates as substrates. The polypeptide is DNA-directed RNA polymerase subunit beta' (Nitrosococcus oceani (strain ATCC 19707 / BCRC 17464 / JCM 30415 / NCIMB 11848 / C-107)).